The following is a 93-amino-acid chain: DNA-binding protein Fis (93 aa).

Positions 74 to 93 form a DNA-binding region, H-T-H motif; it reads QTRAAQMMGINRGTLRKKLK.

It belongs to the transcriptional regulatory Fis family. In terms of assembly, homodimer.

Its function is as follows. Activates ribosomal RNA transcription. Plays a direct role in upstream activation of rRNA promoters. This is DNA-binding protein Fis from Proteus vulgaris.